The primary structure comprises 103 residues: MHVKKGDTVKVISGKDKGKQGVILEAYPKKDRVLVEGVNIVKKHAKPSQENPQGGILNMEAPIHVSNVLPIDPKTGEPTRVGYKVENGKKVRIAKKSGEVLDK.

This sequence belongs to the universal ribosomal protein uL24 family. As to quaternary structure, part of the 50S ribosomal subunit.

Its function is as follows. One of two assembly initiator proteins, it binds directly to the 5'-end of the 23S rRNA, where it nucleates assembly of the 50S subunit. In terms of biological role, one of the proteins that surrounds the polypeptide exit tunnel on the outside of the subunit. The chain is Large ribosomal subunit protein uL24 from Halalkalibacterium halodurans (strain ATCC BAA-125 / DSM 18197 / FERM 7344 / JCM 9153 / C-125) (Bacillus halodurans).